Reading from the N-terminus, the 503-residue chain is SWI/SNF and RSC complexes subunit ssr2 (503 aa).

The region spanning 18–115 (IIVPSYAGWF…YQIDPETRPA (98 aa)) is the SWIRM domain. Ser-175 carries the post-translational modification Phosphoserine. The ZZ-type; degenerate zinc-finger motif lies at 188 to 242 (RVDKVCFTCGVNCSQTWYHNLKNKKYDICPNCYKQGRFSSSFNSSDFLCMDAIDF). Residues Cys-193, Cys-196, Cys-216, and Cys-219 each contribute to the Zn(2+) site. The SANT domain maps to 245–296 (DEEKPWSNQETLLLLEAIETYGDDWNQIALHVGSRTKEQCLIHFLQIPIEDP). Phosphoserine is present on Ser-306.

This sequence belongs to the SMARCC family. As to quaternary structure, component of the RSC complex composed of at least arp9, arp42, rsc1, rsc4, rsc7, rsc9, rsc58, sfh1, snf21, ssr1, ssr2, ssr3 and ssr4. The complex interacts with histone and histone variant components of centromeric chromatin. Component of the SWI/SNF global transcription activator complex composed of at least arp9, arp42, snf5, snf22, snf30, sbf59, sol1, ssr1, ssr2, ssr3, ssr4 and tfg3.

The protein localises to the cytoplasm. Its subcellular location is the nucleus. Functionally, component of the chromatin structure remodeling complex (RSC), which is involved in transcription regulation and nucleosome positioning. Controls particularly membrane and organelle development genes. Part of the SWI/SNF complex, an ATP-dependent chromatin remodeling complex, required for the positive and negative regulation of gene expression of a large number of genes. It changes chromatin structure by altering DNA-histone contacts within a nucleosome, leading eventually to a change in nucleosome position, thus facilitating or repressing binding of gene-specific transcription factors. The sequence is that of SWI/SNF and RSC complexes subunit ssr2 (ssr2) from Schizosaccharomyces pombe (strain 972 / ATCC 24843) (Fission yeast).